Here is a 408-residue protein sequence, read N- to C-terminus: Exo-alpha-sialidase ARB_03431 (408 aa).

The N-terminal stretch at 1-22 is a signal peptide; it reads MGIKQWLLSLVVVAISATATQA. Positions 62, 81, 87, and 150 each coordinate substrate. A glycan (N-linked (GlcNAc...) asparagine) is linked at asparagine 237. Substrate-binding positions include arginine 267, arginine 324, 324 to 325, 333 to 334, lysine 339, tyrosine 360, aspartate 378, and 378 to 380; these read RT, YD, and DWY. N-linked (GlcNAc...) asparagine glycosylation occurs at asparagine 398.

Belongs to the glycosyl hydrolase 33 family.

It localises to the secreted. The catalysed reaction is Hydrolysis of alpha-(2-&gt;3)-, alpha-(2-&gt;6)-, alpha-(2-&gt;8)- glycosidic linkages of terminal sialic acid residues in oligosaccharides, glycoproteins, glycolipids, colominic acid and synthetic substrates.. Functionally, sialidase is able to release sialic acid from a wide variety of natural substrates. The protein is Exo-alpha-sialidase ARB_03431 of Arthroderma benhamiae (strain ATCC MYA-4681 / CBS 112371) (Trichophyton mentagrophytes).